The following is a 596-amino-acid chain: Sodium/mannose cotransporter SLC5A10 (596 aa).

The Extracellular portion of the chain corresponds to M1–Q15. An N-linked (GlcNAc...) asparagine glycan is attached at N4. The helical transmembrane segment at L16–I36 threads the bilayer. The Cytoplasmic segment spans residues W37–G72. The chain crosses the membrane as a helical span at residues S73 to F93. The Extracellular portion of the chain corresponds to E94–Y99. N96 carries N-linked (GlcNAc...) asparagine glycosylation. Residues V100–L120 form a helical membrane-spanning segment. The Cytoplasmic portion of the chain corresponds to P121–K149. 2 positions are modified to phosphoserine: S141 and S145. Phosphothreonine is present on T148. The chain crosses the membrane as a helical span at residues I150–Y170. Residues L171–T173 lie on the Extracellular side of the membrane. Residues I174–Y194 traverse the membrane as a helical segment. The Cytoplasmic portion of the chain corresponds to T195–T200. The chain crosses the membrane as a helical span at residues L201–Y221. Residues G222–T264 lie on the Extracellular side of the membrane. A helical membrane pass occupies residues G265 to V285. The Cytoplasmic segment spans residues Q286–G300. A helical membrane pass occupies residues S301–I321. Over S322–K355 the chain is Extracellular. The chain crosses the membrane as a helical span at residues L356 to A376. At L377–L409 the chain is on the cytoplasmic side. The helical transmembrane segment at L410–V430 threads the bilayer. Topologically, residues L431–M443 are extracellular. The chain crosses the membrane as a helical span at residues Q444 to W464. Residues R465–G471 are Cytoplasmic-facing. Residues A472–L492 traverse the membrane as a helical segment. Over N493 to Y513 the chain is Extracellular. Residues L514–L534 form a helical membrane-spanning segment. The Cytoplasmic portion of the chain corresponds to T535–R575. Residues V576 to A596 form a helical membrane-spanning segment.

Belongs to the sodium:solute symporter (SSF) (TC 2.A.21) family. As to expression, predominantly expressed at high levels in kidney. Very low expression is detected in testes. In terms of tissue distribution, expressed in kidney. The most abundant isoform expressed in kidney.

It localises to the apical cell membrane. The enzyme catalyses D-mannose(out) + Na(+)(out) = D-mannose(in) + Na(+)(in). The catalysed reaction is D-fructopyranose(out) + Na(+)(out) = D-fructopyranose(in) + Na(+)(in). Its activity is regulated as follows. Inhibited by phlorizin. Functionally, electrogenic Na+-coupled sugar symporter that actively transports D-mannose or D-fructose at the plasma membrane, with a Na+ to sugar coupling ratio of 1:1. Transporter activity is driven by a transmembrane Na+ electrochemical gradient set by the Na+/K+ pump. Exclusively recognizes sugar substrates having a pyranose ring with an axial hydroxyl group on carbon 2. Has likely evolved to enable renal reabsorption of D-mannose, an important constituent of oligosaccharide chains of glycoproteins. Contributes to dietary D-fructose reabsorption from glomerular filtrate across the brush border of the kidney. Appears to have no transporter activity. This chain is Sodium/mannose cotransporter SLC5A10 (SLC5A10), found in Homo sapiens (Human).